We begin with the raw amino-acid sequence, 87 residues long: U3-theraphotoxin-Hhn1c (87 aa).

The first 24 residues, 1-24 (MVNMKASMFLTFAGLVLLFVVCHA), serve as a signal peptide directing secretion. The propeptide occupies 25–52 (SESEEKEFPKEMLSSIFAVDDDFKQEER). Cystine bridges form between C54-C67, C61-C72, and C66-C79.

Belongs to the neurotoxin 10 (Hwtx-1) family. 51 (Hntx-8) subfamily. Hntx-8 sub-subfamily. As to expression, expressed by the venom gland.

The protein localises to the secreted. Functionally, ion channel inhibitor. The polypeptide is U3-theraphotoxin-Hhn1c (Cyriopagopus hainanus (Chinese bird spider)).